A 392-amino-acid chain; its full sequence is Chaperone protein DnaJ 2 (392 aa).

One can recognise a J domain in the interval 10–75 (DFYKELGVSS…AKRKEYDETR (66 aa)). A CR-type zinc finger spans residues 161 to 239 (GVAMPLRLTS…CKGTGVTTRT (79 aa)). 8 residues coordinate Zn(2+): C174, C177, C191, C194, C213, C216, C227, and C230. CXXCXGXG motif repeat units lie at residues 174-181 (CTNCHGSG), 191-198 (CPTCNGSG), 213-220 (CTDCRGSG), and 227-234 (CDECKGTG).

It belongs to the DnaJ family. Homodimer. The cofactor is Zn(2+).

The protein resides in the cytoplasm. Functionally, participates actively in the response to hyperosmotic and heat shock by preventing the aggregation of stress-denatured proteins and by disaggregating proteins, also in an autonomous, DnaK-independent fashion. Unfolded proteins bind initially to DnaJ; upon interaction with the DnaJ-bound protein, DnaK hydrolyzes its bound ATP, resulting in the formation of a stable complex. GrpE releases ADP from DnaK; ATP binding to DnaK triggers the release of the substrate protein, thus completing the reaction cycle. Several rounds of ATP-dependent interactions between DnaJ, DnaK and GrpE are required for fully efficient folding. Also involved, together with DnaK and GrpE, in the DNA replication of plasmids through activation of initiation proteins. In Mycolicibacterium paratuberculosis (strain ATCC BAA-968 / K-10) (Mycobacterium paratuberculosis), this protein is Chaperone protein DnaJ 2.